The primary structure comprises 179 residues: CMT1A duplicated region transcript 4 protein homolog (179 aa).

Positions 1–15 are enriched in low complexity; that stretch reads MISRPESSLSGLESS. The interval 1–20 is disordered; it reads MISRPESSLSGLESSQEVQK.

The sequence is that of CMT1A duplicated region transcript 4 protein homolog (Cdrt4) from Mus musculus (Mouse).